We begin with the raw amino-acid sequence, 1544 residues long: MEPATTLPPGPRPALPLGGPGPLGEFLPPPECPVFEPSWEEFADPFAFIHKIRPIAEQTGICKVRPPPDWQPPFACDVDKLHFTPRIQRLNELEAQTRVKLNFLDQIAKYWELQGSTLKIPHVERKILDLFQLNKLVAEEGGFAVVCKDRKWTKIATKMGFAPGKAVGSHIRGHYERILNPYNLFLSGDSLRCLQKPNLTSDTKDKEYKPHDIPQRQSVQPAETCPPARRAKRMRAEAMNIKIEPEEATEARTHNLRRRMGCTTPKWENEKEMKSTIKQEPTEKKDCELESEKEKPKSRAKKTATAVDLYVCLLCGSGNDEDRLLLCDGCDDSYHTFCLVPPLHDVPKGDWRCPKCLAQECNKPQEAFGFEQAARDYTLRTFGEMADAFKSDYFNMPVHMVPTELVEKEFWRLVSTIEEDVTVEYGADIASKEFGSGFPVRDGKIKISPEEEEYLDSGWNLNNMPVMEQSVLAHITADICGMKLPWLYVGMCFSSFCWHIEDHWSYSINYLHWGEPKTWYGVPGYAAEQLENVMKKLAPELFVSQPDLLHQLVTIMNPNTLMTHEVPVYRTNQCAGEFVITFPRAYHSGFNQGFNFAEAVNFCTVDWLPLGRQCVEHYRLLHRYCVFSHDEMICKMASKADVLDVVVASTVQKDMAIMIEDEKALRETVRKLGVIDSERMDFELLPDDERQCIKCKTTCFMSAISCSCKPGLLVCLHHVKELCSCPPYKYNLRYRYTLDDLYPMMNALKLRAESYNEWALNVNEALEAKINKKKSLVSFKALIEESEMKKFPDNDLLRHLRLVTQDAEKCASVAQQLLNGKRQTRYRSGGGKSQNQLTVNELRQFVTQLYALPCVLSQTPLLKDLLNRVEDFQQQSQKLLSEEMPSAAELQELLDVSFEFDVELPQLTEMRIRLEQARWLEEVQQACLDSSSLSLDDMRRLIDLGVGLAPYSAVEKAMARLQELLTVSEHWDDKAKSLLRARPRHSLSSLATAVKEMEEIPAYLPNGTVLKDSVQRARDWVQDVDALQAGGRVPVLETLIELVARGRSIPVHLNSLPRLEMLVAEVHAWKECAAKTFLPENSTYSLLEVLCPRCDIGLLGLKRKQRKLKEPLPSGKKRSTKLESLSDLERALMESKETAAAMATLGEARLREMEALQSLRFANEEKLLSPVQDLEMKVCLCQKTPATPMIQCELCRDAFHTSCVAAPSISQSSRIWLCPHCRRSEKPPLEKILPLLASLQRIRVRLPEGDALRYMIERTVNWQHRAQQLLSSGNLKLVQDQVGSGLLSSRWPASAGQASATDKVSQPPGTTSFSLPDDWDNRTSYLHSPFSTGQSCLPLHGLSPEVNELLMEAQLLQVSLPEIQELYQTLLTKPSSVQQADRSSPVRSSSEKNDCLRGKRDAINSPERKLKRRPEREGLPSERWDRVKHMRTPQKKKIKLSHPKDMDSFKLERERSYDLVRNAETHSLPSDTSYSEQEDSEDEDAICPAVSCLQPEGDEVDWVQCDGSCNQWFHQVCVGVSPEMAEKEDYICVRCTGKDAPSRK.

Residues 1–14 show a composition bias toward pro residues; sequence MEPATTLPPGPRPA. Residues 1–22 are disordered; the sequence is MEPATTLPPGPRPALPLGGPGP. Residues 32 to 73 form the JmjN domain; sequence CPVFEPSWEEFADPFAFIHKIRPIAEQTGICKVRPPPDWQPP. In terms of domain architecture, ARID spans 97-187; that stretch reads TRVKLNFLDQ…ILNPYNLFLS (91 aa). Residues K148, K204, K209, K242, K274, and K278 each participate in a glycyl lysine isopeptide (Lys-Gly) (interchain with G-Cter in SUMO2) cross-link. Residues 200-228 are disordered; it reads TSDTKDKEYKPHDIPQRQSVQPAETCPPA. A compositionally biased stretch (basic and acidic residues) spans 202–214; that stretch reads DTKDKEYKPHDIP. Residues 269-297 are disordered; that stretch reads NEKEMKSTIKQEPTEKKDCELESEKEKPK. The PHD-type 1 zinc finger occupies 309-359; the sequence is LYVCLLCGSGNDEDRLLLCDGCDDSYHTFCLVPPLHDVPKGDWRCPKCLAQ. Y425 contributes to the 2-oxoglutarate binding site. The 167-residue stretch at 453–619 folds into the JmjC domain; it reads EYLDSGWNLN…LGRQCVEHYR (167 aa). Fe cation is bound by residues H499 and E501. The 2-oxoglutarate site is built by S507, N509, and K517. Fe cation is bound at residue H587. Residues 692-744 form a C5HC2 zinc finger; the sequence is CIKCKTTCFMSAISCSCKPGLLVCLHHVKELCSCPPYKYNLRYRYTLDDLYPM. Residue K769 forms a Glycyl lysine isopeptide (Lys-Gly) (interchain with G-Cter in SUMO2) linkage. Position 832 is an N6-acetyllysine (K832). At S986 the chain carries Phosphoserine. Residues 1176-1224 form a PHD-type 2 zinc finger; the sequence is MKVCLCQKTPATPMIQCELCRDAFHTSCVAAPSISQSSRIWLCPHCRRS. Over residues 1297-1314 the composition is skewed to polar residues; that stretch reads QASATDKVSQPPGTTSFS. Positions 1297–1318 are disordered; it reads QASATDKVSQPPGTTSFSLPDD. S1328 bears the Phosphoserine mark. The span at 1374–1388 shows a compositional bias: polar residues; sequence PSSVQQADRSSPVRS. The disordered stretch occupies residues 1374 to 1447; sequence PSSVQQADRS…IKLSHPKDMD (74 aa). The segment covering 1389 to 1427 has biased composition (basic and acidic residues); that stretch reads SSEKNDCLRGKRDAINSPERKLKRRPEREGLPSERWDRV. The span at 1428 to 1441 shows a compositional bias: basic residues; the sequence is KHMRTPQKKKIKLS. A Glycyl lysine isopeptide (Lys-Gly) (interchain with G-Cter in SUMO2) cross-link involves residue K1450. Position 1456 is a phosphoserine (S1456). Residues 1484–1538 form a PHD-type 3 zinc finger; the sequence is DAICPAVSCLQPEGDEVDWVQCDGSCNQWFHQVCVGVSPEMAEKEDYICVRCTGK.

Belongs to the JARID1 histone demethylase family. Interacts with FOXG1B, PAX9, MYC, MYCN and RB1. Interacts with HDAC1, HDAC4, HDAC5 and HDAC7. Interacts (via PHD-type 1 zinc finger) with histone H3 unmodified at 'Lys-4'; the interaction is inhibited when histone H3 is methylated at 'Arg-2' or 'Lys-4'. Fe(2+) serves as cofactor. As to expression, present at highest levels in testis, where it is enriched in spermatogonia and pachytene cells (at protein level).

The protein localises to the nucleus. It carries out the reaction N(6),N(6),N(6)-trimethyl-L-lysyl(4)-[histone H3] + 3 2-oxoglutarate + 3 O2 = L-lysyl(4)-[histone H3] + 3 formaldehyde + 3 succinate + 3 CO2. Functionally, histone demethylase that demethylates 'Lys-4' of histone H3, thereby playing a central role in histone code. Does not demethylate histone H3 'Lys-9' or H3 'Lys-27'. Demethylates trimethylated, dimethylated and monomethylated H3 'Lys-4'. Acts as a transcriptional corepressor for FOXG1B and PAX9. Represses the CLOCK-BMAL1 heterodimer-mediated transcriptional activation of the core clock component PER2. In Mus musculus (Mouse), this protein is Lysine-specific demethylase 5B (Kdm5b).